A 441-amino-acid chain; its full sequence is Probable cytosolic Fe-S cluster assembly factor v1g210509 (441 aa).

[4Fe-4S] cluster is bound by residues C24, C72, C75, C78, C196, C252, and C401.

It belongs to the NARF family.

Its function is as follows. Component of the cytosolic iron-sulfur (Fe/S) protein assembly machinery. Required for maturation of extramitochondrial Fe/S proteins. In Nematostella vectensis (Starlet sea anemone), this protein is Probable cytosolic Fe-S cluster assembly factor v1g210509.